The following is a 640-amino-acid chain: Fructose-1,6-bisphosphatase class 3 (640 aa).

It belongs to the FBPase class 3 family. Requires Mn(2+) as cofactor.

The enzyme catalyses beta-D-fructose 1,6-bisphosphate + H2O = beta-D-fructose 6-phosphate + phosphate. It functions in the pathway carbohydrate biosynthesis; gluconeogenesis. This Lactococcus lactis subsp. cremoris (strain MG1363) protein is Fructose-1,6-bisphosphatase class 3.